A 313-amino-acid polypeptide reads, in one-letter code: ADP-L-glycero-D-manno-heptose-6-epimerase (313 aa).

NADP(+) contacts are provided by residues 10-11 (MI), 31-32 (DN), Lys38, Arg53, 75-79 (EGACS), and Asn92. The active-site Proton acceptor is Tyr139. Lys143 provides a ligand contact to NADP(+). Asn174 is a substrate binding site. NADP(+) is bound by residues Val175 and Lys183. Lys183 acts as the Proton acceptor in catalysis. Substrate contacts are provided by residues Ser185, His192, 206–209 (FAGS), Arg214, and Tyr277.

This sequence belongs to the NAD(P)-dependent epimerase/dehydratase family. HldD subfamily. In terms of assembly, homopentamer. NADP(+) serves as cofactor.

It catalyses the reaction ADP-D-glycero-beta-D-manno-heptose = ADP-L-glycero-beta-D-manno-heptose. The protein operates within nucleotide-sugar biosynthesis; ADP-L-glycero-beta-D-manno-heptose biosynthesis; ADP-L-glycero-beta-D-manno-heptose from D-glycero-beta-D-manno-heptose 7-phosphate: step 4/4. Its pathway is bacterial outer membrane biogenesis; LPS core biosynthesis. Its function is as follows. Catalyzes the interconversion between ADP-D-glycero-beta-D-manno-heptose and ADP-L-glycero-beta-D-manno-heptose via an epimerization at carbon 6 of the heptose. This is ADP-L-glycero-D-manno-heptose-6-epimerase from Vibrio vulnificus (strain CMCP6).